Consider the following 413-residue polypeptide: DnaJ protein homolog xdj1 (413 aa).

Residues 6-73 (KLYDILEVHF…ESREMYDMYG (68 aa)) enclose the J domain. The CR-type zinc finger occupies 134–219 (GKEVKLRATR…CKGSGTVPEQ (86 aa)). CXXCXGXG motif repeat units lie at residues 147 to 154 (CPRCQGRG), 164 to 171 (CLSCDGKG), 191 to 198 (CDTCNGKG), and 207 to 214 (CKHCKGSG). C410 carries the cysteine methyl ester modification. Residue C410 is the site of S-farnesyl cysteine attachment. The propeptide at 411 to 413 (QAQ) is removed in mature form.

The protein localises to the endoplasmic reticulum membrane. This is DnaJ protein homolog xdj1 (xdj1) from Schizosaccharomyces pombe (strain 972 / ATCC 24843) (Fission yeast).